The primary structure comprises 187 residues: KS71A fimbrillin (187 aa).

An N-terminal signal peptide occupies residues 1–21; that stretch reads MIKSVIAGAVAMAVVSFGANA. A disulfide bridge connects residues cysteine 43 and cysteine 82.

The protein belongs to the fimbrial protein family.

The protein localises to the fimbrium. Fimbriae (also called pili), polar filaments radiating from the surface of the bacterium to a length of 0.5-1.5 micrometers and numbering 100-300 per cell, enable bacteria to colonize the epithelium of specific host organs. This Escherichia coli protein is KS71A fimbrillin (KS71A).